The following is a 171-amino-acid chain: MTSPQKAILAGGCFWGMQDLIRKQPGVIATRVGYSGGDVANATYRNHGTHAEAVEIIFDPQATDYRTLLEFFFQIHDPTTPNRQGNDRGTSYRSAIYYLDDEQKRVALDTIADVEASGLWPGKVVTEVSPAGDFWEAEPEHQHYLQRYPSGYTCHFIRPGWKLPRRATAGQ.

Residue Cys-13 is part of the active site.

This sequence belongs to the MsrA Met sulfoxide reductase family.

It catalyses the reaction L-methionyl-[protein] + [thioredoxin]-disulfide + H2O = L-methionyl-(S)-S-oxide-[protein] + [thioredoxin]-dithiol. The catalysed reaction is [thioredoxin]-disulfide + L-methionine + H2O = L-methionine (S)-S-oxide + [thioredoxin]-dithiol. In terms of biological role, has an important function as a repair enzyme for proteins that have been inactivated by oxidation. Catalyzes the reversible oxidation-reduction of methionine sulfoxide in proteins to methionine. The polypeptide is Peptide methionine sulfoxide reductase MsrA (Mycobacterium ulcerans (strain Agy99)).